We begin with the raw amino-acid sequence, 205 residues long: DNA-directed RNA polymerase RPB5 homolog (205 aa).

The protein belongs to the archaeal RpoH/eukaryotic RPB5 RNA polymerase subunit family. As to quaternary structure, part of the viral DNA-directed RNA polymerase that consists of 8 polII-like subunits (RPB1, RPB2, RPB3, RPB5, RPB6, RPB7, RPB9, RPB10), a capping enzyme and a termination factor.

The protein localises to the host cytoplasm. The protein resides in the virion. Its function is as follows. Component of the DNA-directed RNA polymerase (RNAP) that catalyzes the transcription in the cytoplasm of viral DNA into RNA using the four ribonucleoside triphosphates as substrates. The polypeptide is DNA-directed RNA polymerase RPB5 homolog (African swine fever virus (isolate Pig/Kenya/KEN-50/1950) (ASFV)).